Here is a 585-residue protein sequence, read N- to C-terminus: Cyclic nucleotide-binding domain-containing protein 2 (585 aa).

Residue 116-239 (SYRNYAEPLQ…DAQYRFEFFR (124 aa)) coordinates a nucleoside 3',5'-cyclic phosphate.

It is found in the cytoplasm. It localises to the cytosol. Essential for male fertility. Plays an important role in spermatogenesis and regulates sperm motility by controlling the development of the flagellar bending of sperm. The protein is Cyclic nucleotide-binding domain-containing protein 2 (CNBD2) of Macaca fascicularis (Crab-eating macaque).